The following is an 86-amino-acid chain: uncharacterized protein (86 aa).

This is an uncharacterized protein from Bacillus subtilis (strain 168).